The primary structure comprises 430 residues: Chaperone SurA (430 aa).

The signal sequence occupies residues Met-1–Ala-25. PpiC domains lie at Ser-176–Glu-277 and Val-286–Glu-385.

It localises to the periplasm. It carries out the reaction [protein]-peptidylproline (omega=180) = [protein]-peptidylproline (omega=0). In terms of biological role, chaperone involved in the correct folding and assembly of outer membrane proteins. Recognizes specific patterns of aromatic residues and the orientation of their side chains, which are found more frequently in integral outer membrane proteins. May act in both early periplasmic and late outer membrane-associated steps of protein maturation. The protein is Chaperone SurA of Saccharophagus degradans (strain 2-40 / ATCC 43961 / DSM 17024).